A 333-amino-acid chain; its full sequence is Anthranilate phosphoribosyltransferase (333 aa).

Residues Gly81, 84–85 (GD), Thr89, 91–94 (NIST), 109–117 (KHGNRSVSS), and Ala121 each bind 5-phospho-alpha-D-ribose 1-diphosphate. Gly81 contacts anthranilate. Ser93 lines the Mg(2+) pocket. Position 112 (Asn112) interacts with anthranilate. Position 167 (Arg167) interacts with anthranilate. Mg(2+)-binding residues include Asp225 and Glu226.

Belongs to the anthranilate phosphoribosyltransferase family. In terms of assembly, homodimer. Mg(2+) is required as a cofactor.

It carries out the reaction N-(5-phospho-beta-D-ribosyl)anthranilate + diphosphate = 5-phospho-alpha-D-ribose 1-diphosphate + anthranilate. It functions in the pathway amino-acid biosynthesis; L-tryptophan biosynthesis; L-tryptophan from chorismate: step 2/5. Functionally, catalyzes the transfer of the phosphoribosyl group of 5-phosphorylribose-1-pyrophosphate (PRPP) to anthranilate to yield N-(5'-phosphoribosyl)-anthranilate (PRA). The protein is Anthranilate phosphoribosyltransferase of Haemophilus influenzae (strain 86-028NP).